We begin with the raw amino-acid sequence, 370 residues long: Aminomethyltransferase (370 aa).

The protein belongs to the GcvT family. In terms of assembly, the glycine cleavage system is composed of four proteins: P, T, L and H.

The catalysed reaction is N(6)-[(R)-S(8)-aminomethyldihydrolipoyl]-L-lysyl-[protein] + (6S)-5,6,7,8-tetrahydrofolate = N(6)-[(R)-dihydrolipoyl]-L-lysyl-[protein] + (6R)-5,10-methylene-5,6,7,8-tetrahydrofolate + NH4(+). The glycine cleavage system catalyzes the degradation of glycine. In Corynebacterium aurimucosum (strain ATCC 700975 / DSM 44827 / CIP 107346 / CN-1) (Corynebacterium nigricans), this protein is Aminomethyltransferase.